Reading from the N-terminus, the 338-residue chain is Citramalyl-CoA lyase, mitochondrial (338 aa).

The N-terminal 20 residues, 1-20 (MALCVLRNTVRGAAALPRLK), are a transit peptide targeting the mitochondrion. 3 residues coordinate substrate: Tyr48, Lys55, and Lys59. 3 positions are modified to N6-acetyllysine: Lys55, Lys59, and Lys64. Lys80 and Lys90 each carry N6-acetyllysine; alternate. An N6-succinyllysine; alternate mark is found at Lys80 and Lys90. Arg105 is a binding site for substrate. Mg(2+)-binding residues include Glu169 and Asp204. Residue 270–271 (IH) participates in substrate binding. N6-succinyllysine is present on Lys307. Residue Asp318 is part of the active site.

The protein belongs to the HpcH/HpaI aldolase family. Citrate lyase beta subunit-like subfamily. Homotrimer. Mg(2+) is required as a cofactor. As to expression, detected in brown fat, brain, liver, kidney, heart, skeletal muscle and ovary (at protein level).

The protein resides in the mitochondrion. The enzyme catalyses glyoxylate + acetyl-CoA + H2O = (S)-malate + CoA + H(+). It carries out the reaction propanoyl-CoA + glyoxylate + H2O = 3-methylmalate + CoA + H(+). The catalysed reaction is (3S)-citramalyl-CoA = pyruvate + acetyl-CoA. It catalyses the reaction (S)-malyl-CoA + H2O = (S)-malate + CoA + H(+). Functionally, mitochondrial citramalyl-CoA lyase indirectly involved in the vitamin B12 metabolism. Converts citramalyl-CoA into acetyl-CoA and pyruvate in the C5-dicarboxylate catabolism pathway. The C5-dicarboxylate catabolism pathway is required to detoxify itaconate, a vitamin B12-poisoning metabolite. Also acts as a malate synthase in vitro, converting glyoxylate and acetyl-CoA to malate. Also displays malyl-CoA thioesterase activity. Also acts as a beta-methylmalate synthase in vitro, by mediating conversion of glyoxylate and propionyl-CoA to beta-methylmalate. Also has very weak citramalate synthase activity in vitro. In Mus musculus (Mouse), this protein is Citramalyl-CoA lyase, mitochondrial.